The primary structure comprises 101 residues: Synaptobrevin-B (101 aa).

At 1–76 (MSNNPNNSGQ…RRQMWCRNMK (76 aa)) the chain is on the cytoplasmic side. A v-SNARE coiled-coil homology domain is found at 13 to 73 (KTQSILQEVD…VTIRRQMWCR (61 aa)). A helical; Anchor for type IV membrane protein transmembrane segment spans residues 77–97 (LQLIIIAVVILVLAVILIPII). At 98–101 (MKFV) the chain is on the vesicular side.

It belongs to the synaptobrevin family.

The protein localises to the cytoplasmic vesicle. The protein resides in the secretory vesicle membrane. Its function is as follows. Involved in the targeting and/or fusion of transport vesicles to their target membrane. In Dictyostelium discoideum (Social amoeba), this protein is Synaptobrevin-B (sybB).